The following is a 211-amino-acid chain: uncharacterized protein (211 aa).

Over 1-33 the chain is Cytoplasmic; it reads MQNGTEDKSNIPARSNDDVLPPLAVRLTMKVMR. The helical transmembrane segment at 34–54 threads the bilayer; the sequence is LIFIGKMFAYSFVPFPPFKLL. Residues 55–58 are Lumenal-facing; sequence TFDN. The chain crosses the membrane as a helical span at residues 59 to 79; it reads TVGWFVAYSAIVSIWGFAVWM. Residues 80–116 lie on the Cytoplasmic side of the membrane; it reads ERGYRHKINLLPPRCTKIRCSRCNTRIRSPNWFKYKN. A helical membrane pass occupies residues 117-137; it reads WLYFFLLYVSLTTSNLIIQLA. At 138 to 162 the chain is on the lumenal side; it reads SFMTEMSRRGISVPGTKDPGKRDYL. A helical transmembrane segment spans residues 163–183; that stretch reads GLIIPMRFIGAFIHYMTANLF. The Cytoplasmic segment spans residues 184-211; that stretch reads KEYYLHNGPLEKNDRPSTDEKTSENETL.

It localises to the endoplasmic reticulum membrane. This is an uncharacterized protein from Saccharomyces cerevisiae (strain ATCC 204508 / S288c) (Baker's yeast).